A 328-amino-acid polypeptide reads, in one-letter code: Phosphate acyltransferase (328 aa).

Belongs to the PlsX family. Homodimer. Probably interacts with PlsY.

The protein localises to the cytoplasm. The catalysed reaction is a fatty acyl-[ACP] + phosphate = an acyl phosphate + holo-[ACP]. Its pathway is lipid metabolism; phospholipid metabolism. Its function is as follows. Catalyzes the reversible formation of acyl-phosphate (acyl-PO(4)) from acyl-[acyl-carrier-protein] (acyl-ACP). This enzyme utilizes acyl-ACP as fatty acyl donor, but not acyl-CoA. The sequence is that of Phosphate acyltransferase from Mycoplasma genitalium (strain ATCC 33530 / DSM 19775 / NCTC 10195 / G37) (Mycoplasmoides genitalium).